A 141-amino-acid polypeptide reads, in one-letter code: Flagellar assembly factor FliW (141 aa).

Belongs to the FliW family. Interacts with translational regulator CsrA and flagellin(s).

It localises to the cytoplasm. Its function is as follows. Acts as an anti-CsrA protein, binds CsrA and prevents it from repressing translation of its target genes, one of which is flagellin. Binds to flagellin and participates in the assembly of the flagellum. The chain is Flagellar assembly factor FliW from Clostridium botulinum (strain Alaska E43 / Type E3).